Here is a 71-residue protein sequence, read N- to C-terminus: Gas vesicle protein A (71 aa).

It belongs to the gas vesicle GvpA family. In terms of assembly, the gas vesicle shell is 2 nm thick and consists of a single layer of this protein. It forms helical ribs nearly perpendicular to the long axis of the vesicle.

The protein resides in the gas vesicle shell. In terms of biological role, gas vesicles are hollow, gas filled proteinaceous nanostructures found in some microorganisms. During planktonic growth they allow positioning of the organism at a favorable depth for light or nutrient acquisition. GvpA forms the protein shell. Its function is as follows. Cluster expression in E.coli (gvpA1-gvpA2-gvpC-gvpN-gvpJ-gvpK-gvpF-gvpG-gvpV-gvpW) allows cells to float and produces irregularly shaped gas vesicles. This chain is Gas vesicle protein A, found in Nostoc sp. (strain PCC 7120 / SAG 25.82 / UTEX 2576).